Consider the following 252-residue polypeptide: Lipoprotein PrgK (252 aa).

Residues 1-17 (MIRRYLYTFLLVMTLAG) form the signal peptide. The N-palmitoyl cysteine moiety is linked to residue cysteine 18. Cysteine 18 carries the S-diacylglycerol cysteine lipid modification. A helical transmembrane segment spans residues 207–227 (FATSWIVLIILLSVMSAGFGV).

Belongs to the YscJ lipoprotein family.

It localises to the cell outer membrane. Required for invasion of epithelial cells. Could be involved in protein secretion. This Salmonella typhimurium (strain LT2 / SGSC1412 / ATCC 700720) protein is Lipoprotein PrgK (prgK).